We begin with the raw amino-acid sequence, 149 residues long: MKSTLRISLKAGERIFINGAVLRVDRKVALEFLNDVTFLLENHVLQPEGATTPLRQLYFIAQMILINPEGKDHSTALFRKSITMLLSCFRNEEILAELKRIDALVSTGRAFDALKAIRGLYAIEDNILNNHEMPPTMVEQIRREIAPWR.

The protein belongs to the FlbT family.

In terms of biological role, has a post-transcriptional repressor function in flagellum biogenesis. Associates with the 5'-UTR of fljK mRNA and promotes its degradation. In Rhizobium johnstonii (strain DSM 114642 / LMG 32736 / 3841) (Rhizobium leguminosarum bv. viciae), this protein is Probable flagellum biosynthesis repressor protein FlbT.